Consider the following 299-residue polypeptide: Protein charybde (299 aa).

The disordered stretch occupies residues 73-103 (LNTRPSATPPSAGGGGPLAGGGSVGMTTPKQ). The span at 84–96 (AGGGGPLAGGGSV) shows a compositional bias: gly residues.

Belongs to the DDIT4 family.

The protein localises to the cytoplasm. Functionally, inhibits cell growth by regulating the Tor pathway upstream of the Tsc1-Tsc2 complex and downstream of Akt1. Acts as a cell death activator during head development. The polypeptide is Protein charybde (chrb) (Drosophila melanogaster (Fruit fly)).